Consider the following 174-residue polypeptide: UPF0340 protein SAHV_2098 (174 aa).

It belongs to the UPF0340 family.

The sequence is that of UPF0340 protein SAHV_2098 from Staphylococcus aureus (strain Mu3 / ATCC 700698).